Here is a 209-residue protein sequence, read N- to C-terminus: Pyridoxine/pyridoxamine 5'-phosphate oxidase (209 aa).

Substrate is bound by residues 2-5 and Lys66; that span reads RVEY. FMN-binding positions include 61–66, 76–77, Lys83, and Gln105; these read RTVLCK and FT. Tyr123, Arg127, and Ser131 together coordinate substrate. Residues 140-141 and Trp186 each bind FMN; that span reads QS. A substrate-binding site is contributed by 192–194; sequence RVH. An FMN-binding site is contributed by Arg196.

This sequence belongs to the pyridoxamine 5'-phosphate oxidase family. Homodimer. The cofactor is FMN.

The enzyme catalyses pyridoxamine 5'-phosphate + O2 + H2O = pyridoxal 5'-phosphate + H2O2 + NH4(+). It carries out the reaction pyridoxine 5'-phosphate + O2 = pyridoxal 5'-phosphate + H2O2. It functions in the pathway cofactor metabolism; pyridoxal 5'-phosphate salvage; pyridoxal 5'-phosphate from pyridoxamine 5'-phosphate: step 1/1. Its pathway is cofactor metabolism; pyridoxal 5'-phosphate salvage; pyridoxal 5'-phosphate from pyridoxine 5'-phosphate: step 1/1. Functionally, catalyzes the oxidation of either pyridoxine 5'-phosphate (PNP) or pyridoxamine 5'-phosphate (PMP) into pyridoxal 5'-phosphate (PLP). The polypeptide is Pyridoxine/pyridoxamine 5'-phosphate oxidase (Mycobacterium sp. (strain JLS)).